Here is a 152-residue protein sequence, read N- to C-terminus: 3-hydroxyacyl-[acyl-carrier-protein] dehydratase FabZ (152 aa).

His-57 is an active-site residue.

The protein belongs to the thioester dehydratase family. FabZ subfamily.

Its subcellular location is the cytoplasm. It carries out the reaction a (3R)-hydroxyacyl-[ACP] = a (2E)-enoyl-[ACP] + H2O. Involved in unsaturated fatty acids biosynthesis. Catalyzes the dehydration of short chain beta-hydroxyacyl-ACPs and long chain saturated and unsaturated beta-hydroxyacyl-ACPs. The chain is 3-hydroxyacyl-[acyl-carrier-protein] dehydratase FabZ from Pasteurella multocida (strain Pm70).